Reading from the N-terminus, the 372-residue chain is tRNA-specific 2-thiouridylase MnmA (372 aa).

ATP-binding positions include G13–S20 and M39. The segment at N99–D101 is interaction with target base in tRNA. Catalysis depends on C104, which acts as the Nucleophile. C104 and C200 are oxidised to a cystine. Residue G128 coordinates ATP. The segment at K150–Q152 is interaction with tRNA. C200 serves as the catalytic Cysteine persulfide intermediate. Residues R310–Y311 form an interaction with tRNA region.

The protein belongs to the MnmA/TRMU family.

It localises to the cytoplasm. It carries out the reaction S-sulfanyl-L-cysteinyl-[protein] + uridine(34) in tRNA + AH2 + ATP = 2-thiouridine(34) in tRNA + L-cysteinyl-[protein] + A + AMP + diphosphate + H(+). Its function is as follows. Catalyzes the 2-thiolation of uridine at the wobble position (U34) of tRNA, leading to the formation of s(2)U34. This Bacillus licheniformis (strain ATCC 14580 / DSM 13 / JCM 2505 / CCUG 7422 / NBRC 12200 / NCIMB 9375 / NCTC 10341 / NRRL NRS-1264 / Gibson 46) protein is tRNA-specific 2-thiouridylase MnmA.